Consider the following 107-residue polypeptide: Ribonuclease P protein component 4 (107 aa).

Zn(2+)-binding residues include cysteine 66, cysteine 69, cysteine 92, and cysteine 95.

It belongs to the eukaryotic/archaeal RNase P protein component 4 family. Consists of a catalytic RNA component and at least 4-5 protein subunits. Zn(2+) is required as a cofactor.

Its subcellular location is the cytoplasm. It carries out the reaction Endonucleolytic cleavage of RNA, removing 5'-extranucleotides from tRNA precursor.. Its function is as follows. Part of ribonuclease P, a protein complex that generates mature tRNA molecules by cleaving their 5'-ends. The protein is Ribonuclease P protein component 4 of Methanosarcina mazei (strain ATCC BAA-159 / DSM 3647 / Goe1 / Go1 / JCM 11833 / OCM 88) (Methanosarcina frisia).